Here is a 75-residue protein sequence, read N- to C-terminus: Large ribosomal subunit protein bL31 (75 aa).

The protein belongs to the bacterial ribosomal protein bL31 family. Type A subfamily. In terms of assembly, part of the 50S ribosomal subunit.

In terms of biological role, binds the 23S rRNA. The protein is Large ribosomal subunit protein bL31 of Sphingopyxis alaskensis (strain DSM 13593 / LMG 18877 / RB2256) (Sphingomonas alaskensis).